Reading from the N-terminus, the 139-residue chain is Large ribosomal subunit protein uL16c (139 aa).

It belongs to the universal ribosomal protein uL16 family. As to quaternary structure, part of the 50S ribosomal subunit.

It is found in the plastid. The protein localises to the chloroplast. The polypeptide is Large ribosomal subunit protein uL16c (Cryptomeria japonica (Japanese cedar)).